Here is a 250-residue protein sequence, read N- to C-terminus: Peroxiredoxin (250 aa).

Residues 6–163 enclose the Thioredoxin domain; sequence PLIGERFPEM…ILRIVKALKL (158 aa). Residue Cys-50 is the Cysteine sulfenic acid (-SOH) intermediate of the active site. Arg-126 lines the substrate pocket. The cysteines at positions 207 and 213 are disulfide-linked.

Belongs to the peroxiredoxin family. Prx6 subfamily. As to quaternary structure, homodecamer. Pentamer of dimers that assemble into a ring structure.

It is found in the cytoplasm. It catalyses the reaction a hydroperoxide + [thioredoxin]-dithiol = an alcohol + [thioredoxin]-disulfide + H2O. Its function is as follows. Thiol-specific peroxidase that catalyzes the reduction of hydrogen peroxide and organic hydroperoxides to water and alcohols, respectively. Plays a role in cell protection against oxidative stress by detoxifying peroxides. In Aeropyrum pernix (strain ATCC 700893 / DSM 11879 / JCM 9820 / NBRC 100138 / K1), this protein is Peroxiredoxin.